Consider the following 409-residue polypeptide: TNF receptor-associated factor family protein DDB_G0273435/DDB_G0273505 (409 aa).

The RING-type; degenerate zinc-finger motif lies at 20 to 59 (CQLCCNLMNESVSCPNGHCLCKGCFHKQIETVKSECPICC). 2 consecutive TRAF-type zinc fingers follow at residues 75-145 (KHIN…EIEN) and 145-201 (NHQD…HELS). The stretch at 221-250 (HQSLLKSTSKQLKQLRSSCEELETKLINND) forms a coiled coil. An MATH domain is found at 252–380 (SFNGRWIIKQ…NDQLIIKFNI (129 aa)).

This sequence belongs to the TNF receptor-associated factor family. A subfamily.

The protein resides in the cytoplasm. Functionally, probable adapter protein and signal transducer that links members of the tumor necrosis factor receptor family to different signaling pathways by association with the receptor cytoplasmic domain and kinases. The chain is TNF receptor-associated factor family protein DDB_G0273435/DDB_G0273505 from Dictyostelium discoideum (Social amoeba).